The chain runs to 218 residues: Adenylate kinase (218 aa).

12 to 17 (GAGKGT) is a binding site for ATP. Residues 32–61 (STGDIFRKNISENTPLGIEAKSYMDNGQLV) form an NMP region. AMP contacts are provided by residues Thr-33, Arg-38, 59-61 (QLV), 87-90 (GFPR), and Gln-94. The interval 128 to 165 (GRRVCPSCGASYHIKFNPPTNDGKCDLCGSDVIQRKDD) is LID. Arg-129 contributes to the ATP binding site. Zn(2+)-binding residues include Cys-132 and Cys-135. 138 to 139 (SY) serves as a coordination point for ATP. Residues Cys-152 and Cys-155 each coordinate Zn(2+). AMP contacts are provided by Arg-162 and Arg-173. Residue Gln-201 coordinates ATP.

It belongs to the adenylate kinase family. In terms of assembly, monomer.

The protein resides in the cytoplasm. The enzyme catalyses AMP + ATP = 2 ADP. Its pathway is purine metabolism; AMP biosynthesis via salvage pathway; AMP from ADP: step 1/1. In terms of biological role, catalyzes the reversible transfer of the terminal phosphate group between ATP and AMP. Plays an important role in cellular energy homeostasis and in adenine nucleotide metabolism. The protein is Adenylate kinase of Clostridium perfringens (strain 13 / Type A).